The sequence spans 141 residues: HTH-type transcriptional repressor NsrR (141 aa).

The 128-residue stretch at 2 to 129 (QLTNFTDFGL…DKHTIQDMLT (128 aa)) folds into the HTH rrf2-type domain. Residues 28 to 51 (ITVVTETFDVSRNHMVKIINKLGQ) constitute a DNA-binding region (H-T-H motif). Cys91, Cys96, and Cys102 together coordinate [2Fe-2S] cluster.

[2Fe-2S] cluster is required as a cofactor.

Nitric oxide-sensitive repressor of genes involved in protecting the cell against nitrosative stress. May require iron for activity. In Aliivibrio fischeri (strain ATCC 700601 / ES114) (Vibrio fischeri), this protein is HTH-type transcriptional repressor NsrR.